The chain runs to 639 residues: mRNA export factor (639 aa).

Disordered stretches follow at residues 1–45 (MQAE…SLES), 63–287 (LLGD…KWGA), and 322–355 (CTAR…SQPR). Residues 142–152 (PRRRTHARSRS) are compositionally biased toward basic residues. The segment covering 153–169 (PRAGSTSSQQPPSSSGG) has biased composition (low complexity). Basic and acidic residues predominate over residues 175–189 (VRREAGDRETSEKPA). A compositionally biased stretch (polar residues) spans 203 to 215 (HQCQSPPAQTASQ). 2 stretches are compositionally biased toward basic and acidic residues: residues 234–247 (RTPH…HEGA) and 326–348 (DPAR…ERRT). Zn(2+) is bound by residues cysteine 525, histidine 606, cysteine 610, and cysteine 615. The CHC2-type zinc-finger motif lies at 525 to 615 (CHLAASKSPL…HANVCRKEEC (91 aa)).

It belongs to the HHV-1 ICP27 protein family.

The protein localises to the host cytoplasm. It localises to the host nucleus. Functionally, multifunctional regulator of the expression of viral genes that mediates nuclear export of viral intronless mRNAs. This immediate early (EI) protein promotes the nuclear export of viral intronless mRNAs. The polypeptide is mRNA export factor (Amazona oratrix (yellow-headed parrot)).